The primary structure comprises 160 residues: Peptidyl-prolyl cis-trans isomerase CYP18-1 (160 aa).

One can recognise a PPIase cyclophilin-type domain in the interval 3–153 (VTLHTNLGDI…AEIRLNRVTI (151 aa)).

It belongs to the cyclophilin-type PPIase family. As to expression, ubiquitous.

Its subcellular location is the cytoplasm. The enzyme catalyses [protein]-peptidylproline (omega=180) = [protein]-peptidylproline (omega=0). PPIases accelerate the folding of proteins. It catalyzes the cis-trans isomerization of proline imidic peptide bonds in oligopeptides. This chain is Peptidyl-prolyl cis-trans isomerase CYP18-1 (CYP18-1), found in Arabidopsis thaliana (Mouse-ear cress).